A 791-amino-acid chain; its full sequence is Primase D5 (791 aa).

Asp174 is an active-site residue. Residues 346 to 471 form a primase region; it reads SDRGEYLVWL…ELMSILDDIQ (126 aa). The SF3 helicase domain occupies 479–641; it reads ENRELYEQIL…FTNTKKKVHN (163 aa). 505 to 512 contacts ATP; that stretch reads GETATGKS.

Belongs to the poxviridae D5 family. Interacts with A20.

Its function is as follows. Primase which may have roles in initiation of DNA replication or lagging-strand synthesis. The polypeptide is Primase D5 (Fowlpox virus (strain NVSL) (FPV)).